The sequence spans 365 residues: S-adenosylmethionine:tRNA ribosyltransferase-isomerase (365 aa).

Belongs to the QueA family. Monomer.

The protein resides in the cytoplasm. It catalyses the reaction 7-aminomethyl-7-carbaguanosine(34) in tRNA + S-adenosyl-L-methionine = epoxyqueuosine(34) in tRNA + adenine + L-methionine + 2 H(+). Its pathway is tRNA modification; tRNA-queuosine biosynthesis. Its function is as follows. Transfers and isomerizes the ribose moiety from AdoMet to the 7-aminomethyl group of 7-deazaguanine (preQ1-tRNA) to give epoxyqueuosine (oQ-tRNA). This is S-adenosylmethionine:tRNA ribosyltransferase-isomerase from Rickettsia africae (strain ESF-5).